The primary structure comprises 65 residues: Neuropeptide-like protein 28 (65 aa).

Positions 1–22 (MISTSSILILVFLLACFMATSA) are cleaved as a signal peptide. A tyrosine amide mark is found at Tyr-29, Tyr-39, Tyr-47, and Tyr-55. A Tryptophan amide modification is found at Trp-63.

It belongs to the YARP (YGGW-amide related peptide) family.

Its subcellular location is the secreted. May have antimicrobial activity. This chain is Neuropeptide-like protein 28 (nlp-28), found in Caenorhabditis elegans.